We begin with the raw amino-acid sequence, 418 residues long: Chromo domain-containing protein rhino (418 aa).

Positions 24–74 (YVVEKILGKRFVNGRPQVLVKWSGFPNENNTWEPLENVGNCMKLVSDFESE) constitute a Chromo domain. Composition is skewed to low complexity over residues 84 to 99 (AKSVGKSKSSPSSSGP) and 107 to 120 (SSSKKTQQHSKSVQ). Disordered regions lie at residues 84-167 (AKSV…TDST) and 199-337 (PTKD…RCPR). Residues 131 to 143 (NQKKGKNIKKTAG) show a composition bias toward basic residues. Residues 152–167 (PKTQMPSTSQVSTDST) are compositionally biased toward polar residues. The segment covering 218 to 228 (RLIEFPQREDA) has biased composition (basic and acidic residues). Low complexity predominate over residues 258–275 (GESSSSMSLPTVSSTSSE). The segment covering 276–285 (KSIKVTKSEP) has biased composition (basic and acidic residues). The required for interaction with del/deadlock stretch occupies residues 353–418 (TKPFGVNRGL…FESLRIIVPK (66 aa)).

In terms of assembly, homodimer in solution. Dimerization is essential for chromatin binding. Component of the Rhino-Deadlock-Cutoff (RDC) complex, composed of rhi/rhino, del/deadlock and cuff/cutoff. Interacts (via C-terminus) with del/deadlock (via N-terminus); this interaction is direct. Two copies of del/deadlock associate with each rhi/rhino dimer. Interacts with cuff/cutoff; this interaction is indirect and is mediated by del/deadlock. Interacts (via Chromo domain) with kipf/kipferl (via C2H2 type zinc finger 4). Interacts (via Chromo domain) with His3/histone H3 (via N-terminus di- or tri-methylated on 'Lys-10' (H3K9me2/3)); this interaction is direct. Two His3 N-terminal tails oriented anti-parallel to each other are required for dimer binding to His3. In terms of tissue distribution, female specific, expressed in both somatic and germline cells but highly enriched in ovaries. In the germarium of the developing oocyte expressed in germline stem cells, cystoblasts and developing germline cysts. Expressed in nurse cells in the germarium and egg chamber.

It localises to the nucleus. The protein localises to the chromosome. In terms of biological role, involved in piRNA (piwi-interacting RNA)-mediated transposon repression. May be involved in formation of the perinuclear nuage, a subcellular structure implicated in RNA processing that may be involved in transposon RNA surveillance and silencing. Required for ping-pong amplification during piRNA biogenesis, probably by promoting transcription of piRNA precursors. As part of the Rhino-Deadlock-Cutoff (RDC) Complex associates with, and drives non-canonical transcription of germline specific dual-strand piRNA clusters 80F, 38C and 42AB, but not single-stranded piRNA cluster 20A. Induction of piRNA expression is potentially achieved through a mechanism that prevents transcriptional termination and leads to readthrough from flanking transcription units. Recruited to specific chromatin regions by a combination of H3K9me2/3 histone methylation and differentially expressed sequence-specific recruitment factors. This association may involve direct interaction with DNA. Associates with chromatin upon exposure to homologous piRNA and facilitates transcriptional read-through. As part of the RDC complex, involved in suppression of splicing. In ovaries, recruitment to specific heterochromatin clusters is nucleated and stabilized by kipf/kipferl. During oogenesis, involved in axis specification and may regulate chromosome condensation at the onset of a mitotic-like phase that occurs during nurse cell chromosome duplication. Involved in the distribution of mRNAs for proteins that play a role in anterior-posterior and dorsal-ventral axes specification during development of the oocyte, including grk/gurken, osk/oskar and vas/vasa. Mitigates meiotic double strand breaks and interacts with DNA damage signaling to mediate axis specification. This chain is Chromo domain-containing protein rhino, found in Drosophila melanogaster (Fruit fly).